A 227-amino-acid polypeptide reads, in one-letter code: NDR1/HIN1-like protein 10 (227 aa).

The helical transmembrane segment at 42-62 threads the bilayer; that stretch reads VKVIISLIVILGVAALIFWLI. N138 and N210 each carry an N-linked (GlcNAc...) asparagine glycan.

Expressed in senescing leaves.

It is found in the cell membrane. May play a role in plant immunity. The protein is NDR1/HIN1-like protein 10 of Arabidopsis thaliana (Mouse-ear cress).